A 346-amino-acid chain; its full sequence is Dihydroorotate dehydrogenase (quinone) (346 aa).

FMN contacts are provided by residues 62–66 (AGMDK) and threonine 86. Lysine 66 lines the substrate pocket. 111–115 (NRMGF) serves as a coordination point for substrate. The FMN site is built by asparagine 142 and asparagine 175. Asparagine 175 is a substrate binding site. Catalysis depends on serine 178, which acts as the Nucleophile. Asparagine 180 is a binding site for substrate. The FMN site is built by lysine 211 and valine 239. A substrate-binding site is contributed by 240-241 (NT). FMN-binding positions include glycine 261, glycine 289, and 310-311 (YT).

The protein belongs to the dihydroorotate dehydrogenase family. Type 2 subfamily. Monomer. The cofactor is FMN.

The protein localises to the cell membrane. The enzyme catalyses (S)-dihydroorotate + a quinone = orotate + a quinol. It participates in pyrimidine metabolism; UMP biosynthesis via de novo pathway; orotate from (S)-dihydroorotate (quinone route): step 1/1. Functionally, catalyzes the conversion of dihydroorotate to orotate with quinone as electron acceptor. This Thermus thermophilus (strain ATCC 27634 / DSM 579 / HB8) protein is Dihydroorotate dehydrogenase (quinone).